We begin with the raw amino-acid sequence, 651 residues long: ATP-binding cassette sub-family G member 5 (651 aa).

Positions 1 to 32 (MGDLSSLTPGGSMGLQVNRGSQSSLEGAPATA) are disordered. Over 1–383 (MGDLSSLTPG…RVTRNLVRNK (383 aa)) the chain is Cytoplasmic. The region spanning 52 to 293 (RPWWDITSCR…FNDCGYPCPE (242 aa)) is the ABC transporter domain. Residue 86–93 (GSSGSGKT) participates in ATP binding. The chain crosses the membrane as a helical span at residues 384 to 404 (LAVITRLLQNLIMGLFLLFFV). An ABC transmembrane type-2 domain is found at 388–645 (TRLLQNLIMG…ILGIVVFKIR (258 aa)). Residues 405–421 (LRVRSNVLKGAIQDRVG) are Extracellular-facing. The helical transmembrane segment at 422-442 (LLYQFVGATPYTGMLNAVNLF) threads the bilayer. Residues 443–467 (PVLRAVSDQESQDGLYQKWQMMLAY) lie on the Cytoplasmic side of the membrane. The chain crosses the membrane as a helical span at residues 468-489 (ALHVLPFSVVATMIFSSVCYWT). At 490-500 (LGLHPEVARFG) the chain is on the extracellular side. The helical transmembrane segment at 501-521 (YFSAALLAPHLIGEFLTLVLL) threads the bilayer. Over 522–528 (GIVQNPN) the chain is Cytoplasmic. Residues 529-549 (IVNSVVALLSIAGVLVGSGFL) traverse the membrane as a helical segment. At 550–623 (RNIQEMPIPF…PGATSRFTMN (74 aa)) the chain is on the extracellular side. Residues Asn-584 and Asn-591 are each glycosylated (N-linked (GlcNAc...) asparagine). The chain crosses the membrane as a helical span at residues 624–644 (FLILYSFIPALVILGIVVFKI). Residues 645-651 (RDHLISR) lie on the Cytoplasmic side of the membrane.

This sequence belongs to the ABC transporter superfamily. ABCG family. Eye pigment precursor importer (TC 3.A.1.204) subfamily. As to quaternary structure, heterodimer with ABCG8. It depends on Mg(2+) as a cofactor. In terms of processing, N-glycosylated. In terms of tissue distribution, strongly expressed in the liver, lower levels in the small intestine and colon.

It localises to the cell membrane. It is found in the apical cell membrane. The enzyme catalyses cholesterol(in) + ATP + H2O = cholesterol(out) + ADP + phosphate + H(+). The catalysed reaction is sitosterol(in) + ATP + H2O = sitosterol(out) + ADP + phosphate + H(+). With respect to regulation, the ATPase activity of the heterodimer is stimulated by cholate. Taurocholate, glycocholate, taurochenodeoxycholate, glycochenodeoxycholate and taurodeoxycholate also stimulate ATPase activity, but to a lower degree. Glycodeoxycholate has no significant effect on ATPase activity. ATPase activity is inhibited by vanadate and by berillium fluoride. Functionally, ABCG5 and ABCG8 form an obligate heterodimer that mediates Mg(2+)- and ATP-dependent sterol transport across the cell membrane. Plays an essential role in the selective transport of dietary plant sterols and cholesterol in and out of the enterocytes and in the selective sterol excretion by the liver into bile. Required for normal sterol homeostasis. The heterodimer with ABCG8 has ATPase activity. This is ATP-binding cassette sub-family G member 5 from Homo sapiens (Human).